The following is a 197-amino-acid chain: Imidazoleglycerol-phosphate dehydratase (197 aa).

This sequence belongs to the imidazoleglycerol-phosphate dehydratase family.

It is found in the cytoplasm. The catalysed reaction is D-erythro-1-(imidazol-4-yl)glycerol 3-phosphate = 3-(imidazol-4-yl)-2-oxopropyl phosphate + H2O. It functions in the pathway amino-acid biosynthesis; L-histidine biosynthesis; L-histidine from 5-phospho-alpha-D-ribose 1-diphosphate: step 6/9. This chain is Imidazoleglycerol-phosphate dehydratase, found in Nitrobacter hamburgensis (strain DSM 10229 / NCIMB 13809 / X14).